We begin with the raw amino-acid sequence, 687 residues long: Mitochondrial 15S rRNA processing factor ppr3 (687 aa).

A mitochondrion-targeting transit peptide spans 1–49 (MLNKCSGSLTLLAVRRFCGPCRRLHYHKDNPNNINIAKNLLNNNIQARC). PPR repeat units lie at residues 262–296 (NGLV…SITP), 297–331 (SKDF…ATSI), 334–368 (SAET…PIDP), and 372–407 (TTFV…GLRP).

Belongs to the CCM1 family. As to quaternary structure, binds to mitochondrial small subunit 15S rRNA.

It is found in the mitochondrion. Its function is as follows. Regulates mitochondrial small subunit maturation by controlling 15S rRNA 5'-end processing. Localizes to the 5' precursor of the 15S rRNA in a position that is subsequently occupied by mS47 in the mature yeast mtSSU. Uses structure and sequence-specific RNA recognition, binding to a single-stranded region of the precursor and specifically recognizing bases -6 to -1. The exchange of Ccm1 for mS47 is coupled to the irreversible removal of precursor rRNA that is accompanied by conformational changes of the mitoribosomal proteins uS5m and mS26. These conformational changes signal completion of 5'-end rRNA processing through protection of the mature 5'-end of the 15S rRNA and stabilization of mS47. The removal of the 5' precursor together with the dissociation of Ccm1 may be catalyzed by the 5'-3' exoribonuclease Pet127. Involved in the specific removal of group I introns in mitochondrial encoded transcripts. This Schizosaccharomyces pombe (strain 972 / ATCC 24843) (Fission yeast) protein is Mitochondrial 15S rRNA processing factor ppr3.